A 541-amino-acid polypeptide reads, in one-letter code: GMP synthase [glutamine-hydrolyzing] (541 aa).

One can recognise a Glutamine amidotransferase type-1 domain in the interval 15–209; that stretch reads TILTLDFGSQ…AVNICGCKQN (195 aa). The active-site Nucleophile is Cys-91. Catalysis depends on residues His-183 and Glu-185. One can recognise a GMPS ATP-PPase domain in the interval 210–416; it reads WTMARFVDQE…LGIAHEMVMR (207 aa). Residue 238 to 244 participates in ATP binding; that stretch reads SGGVDST. Arg-311, Asp-478, Lys-533, and Glu-539 together coordinate XMP.

As to quaternary structure, homodimer. The cofactor is Mg(2+).

The protein localises to the cytoplasm. It is found in the cytosol. The enzyme catalyses XMP + L-glutamine + ATP + H2O = GMP + L-glutamate + AMP + diphosphate + 2 H(+). It participates in purine metabolism; GMP biosynthesis; GMP from XMP (L-Gln route): step 1/1. In terms of biological role, catalyzes the conversion of xanthine monophosphate (XMP) to GMP in the presence of glutamine and ATP through an adenyl-XMP intermediate. This chain is GMP synthase [glutamine-hydrolyzing] (gua1), found in Aspergillus oryzae (strain ATCC 42149 / RIB 40) (Yellow koji mold).